The primary structure comprises 101 residues: RNA-3 uncharacterized 11.6 kDa protein (101 aa).

This Beet necrotic yellow vein mosaic virus (isolate Yugoslavia/G1) (BNYVV) protein is RNA-3 uncharacterized 11.6 kDa protein.